The primary structure comprises 480 residues: Iroquois-class homeodomain protein IRX-1 (480 aa).

The homeobox; TALE-type DNA-binding region spans 125–188 (YGDPGRPKNA…ANARRRLKKE (64 aa)). 3 disordered regions span residues 190–268 (KVTW…QGSP), 280–354 (SPLG…PLQH), and 401–480 (PHGP…LPSA). The segment covering 210–228 (TEGDPEKAEDDEEIDLESI) has biased composition (acidic residues). Residues 229 to 239 (DIDKIDEHDGD) show a composition bias toward basic and acidic residues. Ser241 is subject to Phosphoserine. Low complexity-rich tracts occupy residues 252 to 262 (PHAPAAPSALA) and 340 to 351 (HPGAHGPSAGAP). The span at 404–417 (PHLPAPPPPQPPVA) shows a compositional bias: pro residues.

It belongs to the TALE/IRO homeobox family.

The protein resides in the nucleus. The polypeptide is Iroquois-class homeodomain protein IRX-1 (IRX1) (Homo sapiens (Human)).